Consider the following 325-residue polypeptide: Tagatose 1,6-diphosphate aldolase 1 (325 aa).

It belongs to the aldolase LacD family.

It carries out the reaction D-tagatofuranose 1,6-bisphosphate = D-glyceraldehyde 3-phosphate + dihydroxyacetone phosphate. It functions in the pathway carbohydrate metabolism; D-tagatose 6-phosphate degradation; D-glyceraldehyde 3-phosphate and glycerone phosphate from D-tagatose 6-phosphate: step 2/2. The sequence is that of Tagatose 1,6-diphosphate aldolase 1 (lacD1) from Streptococcus pyogenes serotype M1.